We begin with the raw amino-acid sequence, 261 residues long: Transmembrane and immunoglobulin domain-containing protein 1 (261 aa).

Positions 1 to 27 (MAQKTSGLIQRCRFLLLMILFLPHVMT) are cleaved as a signal peptide. Residues 28–114 (SSVLSVNGKT…LQRNQSVSIS (87 aa)) enclose the Ig-like C2-type 1 domain. Residues 28-219 (SSVLSVNGKT…IVKDKGSTVP (192 aa)) are Extracellular-facing. Cysteine 54 and cysteine 103 are joined by a disulfide. Residues asparagine 83, asparagine 108, asparagine 118, and asparagine 189 are each glycosylated (N-linked (GlcNAc...) asparagine). In terms of domain architecture, Ig-like C2-type 2 spans 122-208 (PPLLSGNDFQ…LIETKTKDFH (87 aa)). Cysteine 143 and cysteine 194 are joined by a disulfide. The helical transmembrane segment at 220-240 (IEPIIAACVVVFLTLVFGVIA) threads the bilayer. The Cytoplasmic portion of the chain corresponds to 241 to 261 (RRKRIMKLCRKDQGPQCRTAL).

In terms of assembly, homodimer. N-glycosylated.

The protein localises to the cell membrane. Its subcellular location is the cytoplasm. May control cell-cell adhesion, cell migration and proliferation, cell morphology, and protects renal epithelial cells from oxidative cell injury to promote cell survival. This is Transmembrane and immunoglobulin domain-containing protein 1 from Bos taurus (Bovine).